We begin with the raw amino-acid sequence, 459 residues long: mRNA-capping enzyme subunit alpha (459 aa).

The active-site N6-GMP-lysine intermediate is the K70. The interval 415 to 459 is disordered; sequence MAGGSGRPLPSQSQNATLSTSKPVHSQPPSNDKEPKYVDEDDWSD. A compositionally biased stretch (polar residues) spans 424 to 444; it reads PSQSQNATLSTSKPVHSQPPS.

This sequence belongs to the eukaryotic GTase family. In terms of assembly, heterodimer. The mRNA-capping enzyme is composed of two separate chains alpha and beta, respectively a mRNA guanylyltransferase and an mRNA 5'-triphosphate monophosphatase.

Its subcellular location is the nucleus. The catalysed reaction is a 5'-end diphospho-ribonucleoside in mRNA + GTP + H(+) = a 5'-end (5'-triphosphoguanosine)-ribonucleoside in mRNA + diphosphate. In terms of biological role, second step of mRNA capping. Transfer of the GMP moiety of GTP to the 5'-diphosphate terminus of RNA via a covalent enzyme-GMP reaction intermediate. The polypeptide is mRNA-capping enzyme subunit alpha (CEG1) (Saccharomyces cerevisiae (strain ATCC 204508 / S288c) (Baker's yeast)).